We begin with the raw amino-acid sequence, 1412 residues long: ABC transporter C family member 3 (1412 aa).

The interval 1–34 (MELEEVGVEANQPNNDQGSKKQNKNKDKKVKKEK) is disordered. The segment covering 21-34 (KQNKNKDKKVKKEK) has biased composition (basic residues). The next 6 helical transmembrane spans lie at 115–135 (FGLYFVLSWFFYAIYAASQFV), 161–181 (MGYYYALIMFGSAMIGSVCLY), 236–256 (VFQLVNNGVFALPQIIVCLAL), 261–281 (IGWPTFVGLGLMLAAVPFNGI), 346–366 (AMLIVIVAALPTAVSVLVFSS), and 379–399 (IFAALSYLNILRLPLGFLPII). An ABC transmembrane type-1 1 domain is found at 119 to 405 (FVLSWFFYAI…LPIIVALGIQ (287 aa)). One can recognise an ABC transporter 1 domain in the interval 439–662 (IRDATLTWNQ…QKEFSGLLQA (224 aa)). 474-481 (GSVGSGKS) contacts ATP. The next 5 membrane-spanning stretches (helical) occupy residues 724–744 (WKYITVGGGFLFLMAFIFFLM), 787–807 (IYIGVGMTSILISAGRNFLFF), 854–874 (NLMATSISQFLVFFTTVVATL), 875–895 (IIISIITPFLLVPLAPICIIF), and 967–987 (WLGLRLDLLANLVTFFACLFI). Residues 735–1025 (FLMAFIFFLM…ATLQAADTET (291 aa)) enclose the ABC transmembrane type-1 2 domain. The ABC transporter 2 domain maps to 1062-1296 (ITFDNLVMRY…PAGLLNWLVE (235 aa)). 1096–1103 (GRTGAGKS) provides a ligand contact to ATP. Positions 1316–1412 (GVNIDQITPP…DNDNSEAGDN (97 aa)) are disordered. The span at 1342 to 1351 (NINSPPQQSL) shows a compositional bias: polar residues. The segment covering 1367 to 1397 (DNNNNNNNNNNNNNNNNNNNNNNNNNNNNND) has biased composition (low complexity). Residues 1398–1412 (NDNDNDNDNSEAGDN) show a composition bias toward acidic residues.

It belongs to the ABC transporter superfamily. ABCC family. Conjugate transporter (TC 3.A.1.208) subfamily.

It is found in the membrane. The protein is ABC transporter C family member 3 (abcC3) of Dictyostelium discoideum (Social amoeba).